The primary structure comprises 813 residues: Leucine--tRNA ligase (813 aa).

The 'HIGH' region motif lies at 41-51; it reads PYPSGTLHMGH. Residues 575–579 carry the 'KMSKS' region motif; it reads KMSKS. Position 578 (Lys578) interacts with ATP.

The protein belongs to the class-I aminoacyl-tRNA synthetase family.

The protein localises to the cytoplasm. The enzyme catalyses tRNA(Leu) + L-leucine + ATP = L-leucyl-tRNA(Leu) + AMP + diphosphate. The sequence is that of Leucine--tRNA ligase from Francisella tularensis subsp. tularensis (strain WY96-3418).